The primary structure comprises 109 residues: Spermidine export protein MdtI (109 aa).

4 helical membrane-spanning segments follow: residues 6-26 (WVHG…NVLL), 36-56 (CYGI…SQAV), 64-84 (AYAL…WVLF), and 88-108 (LNPK…MIKL).

The protein belongs to the drug/metabolite transporter (DMT) superfamily. Small multidrug resistance (SMR) (TC 2.A.7.1) family. MdtI subfamily. In terms of assembly, forms a complex with MdtJ.

Its subcellular location is the cell inner membrane. Functionally, catalyzes the excretion of spermidine. The chain is Spermidine export protein MdtI from Salmonella arizonae (strain ATCC BAA-731 / CDC346-86 / RSK2980).